Reading from the N-terminus, the 180-residue chain is Large ribosomal subunit protein uL6 (180 aa).

The protein belongs to the universal ribosomal protein uL6 family. As to quaternary structure, part of the 50S ribosomal subunit.

This protein binds to the 23S rRNA, and is important in its secondary structure. It is located near the subunit interface in the base of the L7/L12 stalk, and near the tRNA binding site of the peptidyltransferase center. In Clostridium beijerinckii (strain ATCC 51743 / NCIMB 8052) (Clostridium acetobutylicum), this protein is Large ribosomal subunit protein uL6.